The chain runs to 426 residues: MSSLLLNKEIFSKSISIVGLKVNKTLLKTLAQEFKGYLLIRDRVKHIVDDSDSKDKKLVLLSESIENGNVGAYGVNKQLPDNLQSFLKTHSIEVVKHQVQLNYNNFSYEEVMKELIPTGLPIPHAFEKIGHIAHLNLKEELLPYKNMIGQVILDKKGPQIRTVLNKVGKIDTVFRTFNFELLAGDNDLLAQVVYWNSRLQFEHSNLIQTFKSHDIVVDMFAGVGPFAVPASKLVKCKVYANDLNPNSVKYMRENATRNKASTIEISNLDARDFVRELVSRDPPVAFTQAIMNLPSTSIEFLDVFREIFLNPEKAPPIPAPTIHCYTFTPVSETAGGDLKELTIKNVEAIIKHPLPADTTVYEVRDVSPNKRMMRISFKMPTLKKRKDTENNDDQENNNNSSNNNNNNKIDYNEAVSSGGEGKKIKH.

S-adenosyl-L-methionine is bound by residues His203, 242–243 (DL), 269–270 (DA), and Asn292. The segment at 374-426 (RISFKMPTLKKRKDTENNDDQENNNNSSNNNNNNKIDYNEAVSSGGEGKKIKH) is disordered. Residues 396–407 (NNNNSSNNNNNN) show a composition bias toward low complexity.

It belongs to the class I-like SAM-binding methyltransferase superfamily. TRM5/TYW2 family. In terms of assembly, monomer.

Its subcellular location is the mitochondrion matrix. It localises to the nucleus. The protein localises to the cytoplasm. It catalyses the reaction guanosine(37) in tRNA + S-adenosyl-L-methionine = N(1)-methylguanosine(37) in tRNA + S-adenosyl-L-homocysteine + H(+). In terms of biological role, specifically methylates the N1 position of guanosine-37 in various cytoplasmic and mitochondrial tRNAs. Methylation is not dependent on the nature of the nucleoside 5' of the target nucleoside. This is the first step in the biosynthesis of wybutosine (yW), a modified base adjacent to the anticodon of tRNAs and required for accurate decoding. This chain is tRNA (guanine(37)-N(1))-methyltransferase (trmt5), found in Heterostelium pallidum (strain ATCC 26659 / Pp 5 / PN500) (Cellular slime mold).